The chain runs to 506 residues: MKKILFMDTTLRDGEQSPGVNLNEQEKLQIARQLERLGIHVMEAGFAAASEGDFQSVKRIANTIQNATVMSLARAKESDIRRAYEAVKGAVSPRLHVFLATSDIHMKYKLCMSKEDVLDSIYRSVTLGKSLFPTVQFSAEDATRTSRDFLAEAVEVAIRAGANVINIPDTVGYTNPEEYYSLFKYLQESVPSYEKAIFSCHCHDDLGMAVANSLAAVEGGALQVEGTINGIGERAGNAALEEVAVALHIRKDFYKAEPSMTLKEIKATSTLVSRLTGMVVPKNKAIVGANAFAHESGIHQDGVLKEVTTYEIIEPALVGESQNLFVLGKHSGRHAFTEKMKELGYEFTNDERDAVFEAFKKLADRKKEITEEDLRALMLGEAAFAAQQYNITQLQVHFVSNSTQCATVVLKDEEGNVFEDAATGSGSIEAIYNAIQRILGLECELADYRIQSITQGQDALAHVHVELKEGAHQVSGFGVAQDVLEASARAYVHAAGKLKSFIQLVK.

A Pyruvate carboxyltransferase domain is found at 4-266 (ILFMDTTLRD…EPSMTLKEIK (263 aa)). The Mn(2+) site is built by Asp13, His201, His203, and Asn237. A regulatory domain region spans residues 390-506 (NITQLQVHFV…KLKSFIQLVK (117 aa)).

This sequence belongs to the alpha-IPM synthase/homocitrate synthase family. LeuA type 1 subfamily. As to quaternary structure, homodimer. Requires Mn(2+) as cofactor.

The protein resides in the cytoplasm. The catalysed reaction is 3-methyl-2-oxobutanoate + acetyl-CoA + H2O = (2S)-2-isopropylmalate + CoA + H(+). It participates in amino-acid biosynthesis; L-leucine biosynthesis; L-leucine from 3-methyl-2-oxobutanoate: step 1/4. Functionally, catalyzes the condensation of the acetyl group of acetyl-CoA with 3-methyl-2-oxobutanoate (2-ketoisovalerate) to form 3-carboxy-3-hydroxy-4-methylpentanoate (2-isopropylmalate). This Bacillus thuringiensis (strain Al Hakam) protein is 2-isopropylmalate synthase.